Here is a 106-residue protein sequence, read N- to C-terminus: Antitoxin MazE3 (106 aa).

Forms a complex with cognate toxin MazF3, possibly with 1:1 stoichiometry.

Antitoxin component of a type II toxin-antitoxin (TA) system. Upon expression in E.coli and M.smegmatis neutralizes the effect of cognate toxin MazF3. Overexpression of MazE3 alone decreased persister cells formation in M.smegmatis upon challenge with gentamicin or kanamycin. This is Antitoxin MazE3 (mazE3) from Mycobacterium tuberculosis (strain ATCC 25618 / H37Rv).